The sequence spans 507 residues: ATP synthase subunit alpha, chloroplastic (507 aa).

Residue G170–T177 participates in ATP binding.

Belongs to the ATPase alpha/beta chains family. As to quaternary structure, F-type ATPases have 2 components, CF(1) - the catalytic core - and CF(0) - the membrane proton channel. CF(1) has five subunits: alpha(3), beta(3), gamma(1), delta(1), epsilon(1). CF(0) has four main subunits: a, b, b' and c.

It is found in the plastid. The protein resides in the chloroplast thylakoid membrane. The catalysed reaction is ATP + H2O + 4 H(+)(in) = ADP + phosphate + 5 H(+)(out). In terms of biological role, produces ATP from ADP in the presence of a proton gradient across the membrane. The alpha chain is a regulatory subunit. The sequence is that of ATP synthase subunit alpha, chloroplastic from Nicotiana sylvestris (Wood tobacco).